The chain runs to 507 residues: Maturase K (507 aa).

This sequence belongs to the intron maturase 2 family. MatK subfamily.

It is found in the plastid. It localises to the chloroplast. Usually encoded in the trnK tRNA gene intron. Probably assists in splicing its own and other chloroplast group II introns. The protein is Maturase K of Calocedrus decurrens (California incense-cedar).